A 218-amino-acid chain; its full sequence is Protein-L-isoaspartate O-methyltransferase (218 aa).

Residue serine 60 is part of the active site.

Belongs to the methyltransferase superfamily. L-isoaspartyl/D-aspartyl protein methyltransferase family.

Its subcellular location is the cytoplasm. It carries out the reaction [protein]-L-isoaspartate + S-adenosyl-L-methionine = [protein]-L-isoaspartate alpha-methyl ester + S-adenosyl-L-homocysteine. Catalyzes the methyl esterification of L-isoaspartyl residues in peptides and proteins that result from spontaneous decomposition of normal L-aspartyl and L-asparaginyl residues. It plays a role in the repair and/or degradation of damaged proteins. This chain is Protein-L-isoaspartate O-methyltransferase, found in Roseiflexus castenholzii (strain DSM 13941 / HLO8).